A 363-amino-acid polypeptide reads, in one-letter code: S-adenosylmethionine:tRNA ribosyltransferase-isomerase (363 aa).

This sequence belongs to the QueA family. In terms of assembly, monomer.

It is found in the cytoplasm. The catalysed reaction is 7-aminomethyl-7-carbaguanosine(34) in tRNA + S-adenosyl-L-methionine = epoxyqueuosine(34) in tRNA + adenine + L-methionine + 2 H(+). It functions in the pathway tRNA modification; tRNA-queuosine biosynthesis. Functionally, transfers and isomerizes the ribose moiety from AdoMet to the 7-aminomethyl group of 7-deazaguanine (preQ1-tRNA) to give epoxyqueuosine (oQ-tRNA). The sequence is that of S-adenosylmethionine:tRNA ribosyltransferase-isomerase from Brucella melitensis biotype 2 (strain ATCC 23457).